The following is a 132-amino-acid chain: Small ribosomal subunit protein uS8 (132 aa).

Belongs to the universal ribosomal protein uS8 family. In terms of assembly, part of the 30S ribosomal subunit. Contacts proteins S5 and S12.

One of the primary rRNA binding proteins, it binds directly to 16S rRNA central domain where it helps coordinate assembly of the platform of the 30S subunit. The protein is Small ribosomal subunit protein uS8 of Xylella fastidiosa (strain M12).